A 28-amino-acid polypeptide reads, in one-letter code: Cyclotide vodo I2 (28 aa).

Cystine bridges form between cysteine 4–cysteine 18, cysteine 8–cysteine 20, and cysteine 13–cysteine 25.

In terms of processing, this is a cyclic peptide. Post-translationally, contains 3 disulfide bonds.

Functionally, probably participates in a plant defense mechanism. In Viola odorata (Sweet violet), this protein is Cyclotide vodo I2.